The following is a 261-amino-acid chain: ER membrane protein complex subunit 3 (261 aa).

At 2–14 (AGPELLLDSNIRL) the chain is on the lumenal side. The chain crosses the membrane as a helical span at residues 15 to 38 (WVVLPIVIITFFVGMIRHYVSILL). Topologically, residues 39–114 (QSDKKLTQEQ…TMLTDMMKGN (76 aa)) are cytoplasmic. The chain crosses the membrane as a helical span at residues 115 to 130 (VTNVLPMILIGGWINM). The Lumenal portion of the chain corresponds to 131-168 (TFSGFVTTKVPFPLTLRFKPMLQQGIELLTLDASWVSS). A helical transmembrane segment spans residues 169–187 (ASWYFLNVFGLRSIYSLIL). Residues 188–261 (GQDNAADQSR…FKKELQTSIF (74 aa)) are Cytoplasmic-facing.

The protein belongs to the EMC3 family. In terms of assembly, component of the ER membrane protein complex (EMC).

The protein localises to the endoplasmic reticulum membrane. In terms of biological role, part of the endoplasmic reticulum membrane protein complex (EMC) that enables the energy-independent insertion into endoplasmic reticulum membranes of newly synthesized membrane proteins. Preferentially accommodates proteins with transmembrane domains that are weakly hydrophobic or contain destabilizing features such as charged and aromatic residues. Involved in the cotranslational insertion of multi-pass membrane proteins in which stop-transfer membrane-anchor sequences become ER membrane spanning helices. It is also required for the post-translational insertion of tail-anchored/TA proteins in endoplasmic reticulum membranes. By mediating the proper cotranslational insertion of N-terminal transmembrane domains in an N-exo topology, with translocated N-terminus in the lumen of the ER, controls the topology of multi-pass membrane proteins like the G protein-coupled receptors. By regulating the insertion of various proteins in membranes, it is indirectly involved in many cellular processes. This Homo sapiens (Human) protein is ER membrane protein complex subunit 3 (EMC3).